We begin with the raw amino-acid sequence, 702 residues long: ATP-dependent zinc metalloprotease FtsH (702 aa).

At 1–26 the chain is on the cytoplasmic side; it reads MKKRNKGLVEQTTTEKNNFSRKTAWK. A helical membrane pass occupies residues 27–47; sequence VFWWVIILAVVIGVLAYIFSP. Topologically, residues 48 to 175 are extracellular; that stretch reads RAATAVVESW…FIAPDTRARD (128 aa). The chain crosses the membrane as a helical span at residues 176–196; it reads VLNGLFGLLPIIIFVVFFLLF. Residues 197 to 702 lie on the Cytoplasmic side of the membrane; sequence WRSARGISAG…EVKPESETNS (506 aa). 271-278 provides a ligand contact to ATP; that stretch reads GPPGTGKT. Zn(2+) is bound at residue His-493. Residue Glu-494 is part of the active site. The Zn(2+) site is built by His-497 and Asp-572. A disordered region spans residues 682-702; it reads EQQAKQKLNKSEVKPESETNS. Residues 690-702 are compositionally biased toward basic and acidic residues; it reads NKSEVKPESETNS.

It in the central section; belongs to the AAA ATPase family. The protein in the C-terminal section; belongs to the peptidase M41 family. As to quaternary structure, homohexamer. Requires Zn(2+) as cofactor.

It localises to the cell membrane. In terms of biological role, acts as a processive, ATP-dependent zinc metallopeptidase for both cytoplasmic and membrane proteins. Plays a role in the quality control of integral membrane proteins. This Mycoplasma genitalium (strain ATCC 33530 / DSM 19775 / NCTC 10195 / G37) (Mycoplasmoides genitalium) protein is ATP-dependent zinc metalloprotease FtsH.